The following is a 530-amino-acid chain: Tyrosinase (530 aa).

The first 18 residues, 1–18, serve as a signal peptide directing secretion; sequence MLLAALCCLLWSFRTSTG. The Lumenal, melanosome segment spans residues 19–473; the sequence is HFPRACASSK…IKPYLEQASR (455 aa). N-linked (GlcNAc...) asparagine glycans are attached at residues Asn86, Asn111, and Asn161. The Cu cation site is built by His180, His202, and His211. N-linked (GlcNAc...) asparagine glycosylation is found at Asn230 and Asn337. Residues His363 and His367 each contribute to the Cu cation site. N-linked (GlcNAc...) asparagine glycosylation is present at Asn371. His390 is a binding site for Cu cation. Residues 474-494 form a helical membrane-spanning segment; sequence IWPWLIGAAVVGCVVTAVLGG. The Cytoplasmic segment spans residues 495 to 530; it reads LTSLLCRRNRKQLHEEKQPLLMEKEDYHSLLYQTHL.

Belongs to the tyrosinase family. Forms an OPN3-dependent complex with DCT in response to blue light in melanocytes. The cofactor is Cu(2+). Post-translationally, glycosylated.

It is found in the melanosome membrane. The protein localises to the melanosome. It catalyses the reaction 2 L-dopa + O2 = 2 L-dopaquinone + 2 H2O. It carries out the reaction L-tyrosine + O2 = L-dopaquinone + H2O. The catalysed reaction is 2 5,6-dihydroxyindole-2-carboxylate + O2 = 2 indole-5,6-quinone-2-carboxylate + 2 H2O. Its function is as follows. This is a copper-containing oxidase that functions in the formation of pigments such as melanins and other polyphenolic compounds. Catalyzes the initial and rate limiting step in the cascade of reactions leading to melanin production from tyrosine. In addition to hydroxylating tyrosine to DOPA (3,4-dihydroxyphenylalanine), also catalyzes the oxidation of DOPA to DOPA-quinone, and possibly the oxidation of DHI (5,6-dihydroxyindole) to indole-5,6 quinone. This chain is Tyrosinase (TYR), found in Canis lupus familiaris (Dog).